The chain runs to 440 residues: Trigger factor (440 aa).

The PPIase FKBP-type domain occupies 160-253; that stretch reads KDTVIGDALR…VTEVKRLELP (94 aa).

Belongs to the FKBP-type PPIase family. Tig subfamily.

It is found in the cytoplasm. The enzyme catalyses [protein]-peptidylproline (omega=180) = [protein]-peptidylproline (omega=0). Functionally, involved in protein export. Acts as a chaperone by maintaining the newly synthesized protein in an open conformation. Functions as a peptidyl-prolyl cis-trans isomerase. The protein is Trigger factor of Chlorobium chlorochromatii (strain CaD3).